Consider the following 33-residue polypeptide: Photosystem II reaction center protein T (33 aa).

A helical membrane pass occupies residues 3 to 23 (ALVYTFLLVSTLGILFFSIFF).

This sequence belongs to the PsbT family. PSII is composed of 1 copy each of membrane proteins PsbA, PsbB, PsbC, PsbD, PsbE, PsbF, PsbH, PsbI, PsbJ, PsbK, PsbL, PsbM, PsbT, PsbY, PsbZ, Psb30/Ycf12, at least 3 peripheral proteins of the oxygen-evolving complex and a large number of cofactors. It forms dimeric complexes.

The protein resides in the plastid. It is found in the chloroplast thylakoid membrane. Found at the monomer-monomer interface of the photosystem II (PS II) dimer, plays a role in assembly and dimerization of PSII. PSII is a light-driven water plastoquinone oxidoreductase, using light energy to abstract electrons from H(2)O, generating a proton gradient subsequently used for ATP formation. In Pelargonium hortorum (Common geranium), this protein is Photosystem II reaction center protein T.